The sequence spans 140 residues: UPF0102 protein alr1796 (140 aa).

This sequence belongs to the UPF0102 family.

The sequence is that of UPF0102 protein alr1796 from Nostoc sp. (strain PCC 7120 / SAG 25.82 / UTEX 2576).